Reading from the N-terminus, the 620-residue chain is Endoglucanase 10 (620 aa).

Residues 1–26 form a disordered region; the sequence is MFGRDPWGGPLEISNADSATDDDRSR. Residues 72-92 traverse the membrane as a helical; Signal-anchor for type II membrane protein segment; sequence IFMWTVGTILGVGLFIGFVMM. The Nucleophile role is filled by D165. 6 N-linked (GlcNAc...) asparagine glycosylation sites follow: N216, N314, N323, N344, N408, and N425. Catalysis depends on residues H513 and D561. A glycan (N-linked (GlcNAc...) asparagine) is linked at N567. Residue E570 is part of the active site.

The protein belongs to the glycosyl hydrolase 9 (cellulase E) family. Ubiquitous.

The protein resides in the membrane. The catalysed reaction is Endohydrolysis of (1-&gt;4)-beta-D-glucosidic linkages in cellulose, lichenin and cereal beta-D-glucans.. This is Endoglucanase 10 (GLU2) from Oryza sativa subsp. japonica (Rice).